Reading from the N-terminus, the 286-residue chain is Nucleotide-binding protein HAPS_0087 (286 aa).

Residue 8–15 participates in ATP binding; sequence GRSGSGKS. Residue 56 to 59 coordinates GTP; the sequence is DVRN.

It belongs to the RapZ-like family.

Displays ATPase and GTPase activities. This is Nucleotide-binding protein HAPS_0087 from Glaesserella parasuis serovar 5 (strain SH0165) (Haemophilus parasuis).